The sequence spans 463 residues: Probable cysteine protease RD21B (463 aa).

The signal sequence occupies residues 1–21 (MGFLKLSPMILLLAMIGVSYA). A propeptide spans 22 to 137 (MDMSIISYDE…DRYQARVGDA (116 aa)) (activation peptide). N-linked (GlcNAc...) asparagine glycosylation is present at asparagine 92. 5 disulfide bridges follow: cysteine 159-cysteine 201, cysteine 193-cysteine 234, cysteine 292-cysteine 343, cysteine 376-cysteine 388, and cysteine 382-cysteine 403. The active site involves cysteine 162. Active-site residues include histidine 298 and asparagine 318. A propeptide spans 354 to 463 (KKGQNPPNPG…FWAKSRKHIA (110 aa)) (removed in mature form). A glycan (N-linked (GlcNAc...) asparagine) is linked at asparagine 415.

Belongs to the peptidase C1 family. In terms of assembly, interacts with PRN2. Interacts with WSCP.

Functionally, probable thiol protease. This is Probable cysteine protease RD21B from Arabidopsis thaliana (Mouse-ear cress).